We begin with the raw amino-acid sequence, 848 residues long: Translation initiation factor IF-2 (848 aa).

A disordered region spans residues 1–20; it reads MNESKGAVDSGLMSGKTERT. Positions 346 to 516 constitute a tr-type G domain; the sequence is PRAPVVTVMG…LLMAELLELK (171 aa). Residues 355–362 form a G1 region; that stretch reads GHVDHGKT. 355–362 provides a ligand contact to GTP; it reads GHVDHGKT. The interval 380-384 is G2; it reads GITQH. The segment at 402-405 is G3; that stretch reads DTPG. Residues 402-406 and 456-459 each bind GTP; these read DTPGH and NKID. Residues 456–459 form a G4 region; sequence NKID. The interval 492–494 is G5; sequence SAK.

Belongs to the TRAFAC class translation factor GTPase superfamily. Classic translation factor GTPase family. IF-2 subfamily.

It is found in the cytoplasm. One of the essential components for the initiation of protein synthesis. Protects formylmethionyl-tRNA from spontaneous hydrolysis and promotes its binding to the 30S ribosomal subunits. Also involved in the hydrolysis of GTP during the formation of the 70S ribosomal complex. The chain is Translation initiation factor IF-2 from Ehrlichia canis (strain Jake).